The chain runs to 341 residues: L-threonine 3-dehydrogenase (341 aa).

Cys-38 serves as a coordination point for Zn(2+). Catalysis depends on charge relay system residues Thr-40 and His-43. His-63, Glu-64, Cys-93, Cys-96, Cys-99, and Cys-107 together coordinate Zn(2+). NAD(+)-binding positions include Ile-175, Asp-195, Arg-200, 262-264, and 286-287; these read LGI and IY.

The protein belongs to the zinc-containing alcohol dehydrogenase family. As to quaternary structure, homotetramer. The cofactor is Zn(2+).

It is found in the cytoplasm. The catalysed reaction is L-threonine + NAD(+) = (2S)-2-amino-3-oxobutanoate + NADH + H(+). Its pathway is amino-acid degradation; L-threonine degradation via oxydo-reductase pathway; glycine from L-threonine: step 1/2. In terms of biological role, catalyzes the NAD(+)-dependent oxidation of L-threonine to 2-amino-3-ketobutyrate. The polypeptide is L-threonine 3-dehydrogenase (Shewanella oneidensis (strain ATCC 700550 / JCM 31522 / CIP 106686 / LMG 19005 / NCIMB 14063 / MR-1)).